The following is a 220-amino-acid chain: Adenylate kinase (220 aa).

12–17 contributes to the ATP binding site; the sequence is GAGKGT. Residues 32 to 62 are NMP; the sequence is STGDIFRDIVKKENDELGKKIKEIMERGELV. AMP contacts are provided by residues Thr-33, Arg-38, 60 to 62, 88 to 91, and Gln-95; these read ELV and GYPR. Residues 129 to 166 are LID; that stretch reads ARRICPKCGRIYNLISLPPKEDELCDDCKVKLVQREDD. Residue Arg-130 participates in ATP binding. 2 residues coordinate Zn(2+): Cys-133 and Cys-136. 139–140 is a binding site for ATP; sequence IY. Cys-153 and Cys-156 together coordinate Zn(2+). AMP-binding residues include Arg-163 and Arg-174. An ATP-binding site is contributed by Ile-202.

It belongs to the adenylate kinase family. Monomer.

It is found in the cytoplasm. It carries out the reaction AMP + ATP = 2 ADP. Its pathway is purine metabolism; AMP biosynthesis via salvage pathway; AMP from ADP: step 1/1. Functionally, catalyzes the reversible transfer of the terminal phosphate group between ATP and AMP. Plays an important role in cellular energy homeostasis and in adenine nucleotide metabolism. This is Adenylate kinase from Thermotoga maritima (strain ATCC 43589 / DSM 3109 / JCM 10099 / NBRC 100826 / MSB8).